Reading from the N-terminus, the 1426-residue chain is Epidermal growth factor receptor (1426 aa).

The first 30 residues, 1-30, serve as a signal peptide directing secretion; it reads MLLRRRNGPCPFPLLLLLLAHCICIWPASA. The Extracellular segment spans residues 31 to 868; sequence ARDRYARQNN…SKITANLDVN (838 aa). N-linked (GlcNAc...) asparagine glycans are attached at residues Asn-128, Asn-241, Asn-419, Asn-443, Asn-482, Asn-569, Asn-599, Asn-617, Asn-816, Asn-823, and Asn-828. Residues 869-889 form a helical membrane-spanning segment; the sequence is MIFIITGAVLVPTICILCVVT. The Cytoplasmic portion of the chain corresponds to 890 to 1426; sequence YICRQKQKAK…HRNRNTETRV (537 aa). At Thr-902 the chain carries Phosphothreonine; by PKC. One can recognise a Protein kinase domain in the interval 938 to 1198; the sequence is LRKGGVLGMG…QLTTVFAEFA (261 aa). ATP-binding positions include 944 to 952 and Lys-971; that span reads LGMGAFGRV. Asp-1063 (proton acceptor) is an active-site residue. Positions 1232–1297 are disordered; sequence PTTDGSEAIA…DSSAREVGVG (66 aa). Residues 1257–1276 are compositionally biased toward basic and acidic residues; that stretch reads HRTDCTDEMPKLNRYCKDPS. A Phosphotyrosine; by autocatalysis modification is found at Tyr-1310.

It belongs to the protein kinase superfamily. Tyr protein kinase family. EGF receptor subfamily. As to quaternary structure, homodimer. Binding of the ligand spitz triggers homodimerization of the receptor however, it is able to form dimers, albeit weakly, in the absence of spitz. Interacts (when phosphorylated on tyrosine residues) with Vav (via SH2 domain). Interacts (when ubiquitinated) with Graf. May interact (when phosphorylated) with EGFRAP (via SH2 domain). Ubiquitination by Cbl in response to high spi, promotes its interaction with Graf and thus facilitates its GPI-enriched endocytic compartment (GEEC) mediated endocytosis and its subsequent degradation. Ubiquitously expressed in embryos. In larvae, uniform expression is seen in wing disks, genital disk, anlagen of testis and ovary, and brain cortex. In eye-antenna disk, highest expression is anterior to morphogenetic furrow, levels remain high in photoreceptor precursor cells. This pattern is reversed in posterior eye disk. In adults expression is high in brain cortex and thoracic and abdominal ganglia.

It localises to the membrane. The enzyme catalyses L-tyrosyl-[protein] + ATP = O-phospho-L-tyrosyl-[protein] + ADP + H(+). Functionally, receptor tyrosine kinase, binding ligands of the EGF family and activating several signaling cascades to convert extracellular cues into appropriate cellular responses. Known ligands include spitz, gurken, vein and giant-lens. Transduces the signal through the ras-raf-MAPK pathway. Critical for the proliferation of imaginal tissues, and for the determination of both the antero-posterior and dorso-ventral polarities of the oocyte. In the embryo, plays a role in the establishment of ventral cell fates, maintenance of amnioserosa and ventral neuroectodermal cells, germ band retraction, cell fate specification in the central nervous system, and production and repair of the cuticle. During dorsal closure (DC) functions with the dpp- and ACK-signaling pathways to regulate expression of the myosin zip in the embryonic epidermis and amnioserosa (AS), and thus coordinate the progression of epidermal cell shape changes required for correct DC. In the embryonic epidermis, functions by negatively regulating dpp and consequently the dpp-dependent expression of the myosin zip. In the AS, negatively regulates the production/ and or secretion of a diffusible signal which, is produced by the ACK-signaling pathway, and acts in the AS and epidermal cells to promote zip expression. Also required in the AS to inhibit or delay apoptosis, and consequently slow the rate of DC. Therefore functions at multiple levels to negatively regulate morphogenesis during DC, suggesting that it acts as a general brake mechanism for adjusting the rate of dorsal closure to ensure that closure proceeds smoothly and without loss of epidermal integrity. During oogenesis, one of two tyrosine kinase chemoattractant receptors (Egfr and Pvr), that function in the border cells (BC) to detect guidance cues from the oocyte and transduce this information to the guidance pathway that regulate the collective migration of the BC cluster through the nurse cells to the oocyte. In Drosophila melanogaster (Fruit fly), this protein is Epidermal growth factor receptor (Egfr).